The sequence spans 472 residues: L-fuculokinase (472 aa).

This sequence belongs to the FGGY kinase family. The cofactor is a divalent metal cation.

The enzyme catalyses L-fuculose + ATP = L-fuculose 1-phosphate + ADP + H(+). Its pathway is carbohydrate degradation; L-fucose degradation; L-lactaldehyde and glycerone phosphate from L-fucose: step 2/3. Its function is as follows. Catalyzes the phosphorylation of L-fuculose. Can also phosphorylate, with lower efficiency, D-ribulose, D-xylulose and D-fructose. The sequence is that of L-fuculokinase from Escherichia coli (strain K12).